The chain runs to 396 residues: Elongation factor Tu 2 (396 aa).

A tr-type G domain is found at 10-206; sequence KPHVNVGTIG…ALDTYIPTPE (197 aa). The segment at 19-26 is G1; it reads GHVDHGKT. 19–26 is a GTP binding site; it reads GHVDHGKT. Position 26 (T26) interacts with Mg(2+). The segment at 60-64 is G2; sequence GITIN. A G3 region spans residues 81–84; sequence DCPG. Residues 81-85 and 136-139 each bind GTP; these read DCPGH and NKAD. The tract at residues 136 to 139 is G4; sequence NKAD. A G5 region spans residues 174–176; it reads SAK.

It belongs to the TRAFAC class translation factor GTPase superfamily. Classic translation factor GTPase family. EF-Tu/EF-1A subfamily. As to quaternary structure, monomer.

It localises to the cytoplasm. It catalyses the reaction GTP + H2O = GDP + phosphate + H(+). GTP hydrolase that promotes the GTP-dependent binding of aminoacyl-tRNA to the A-site of ribosomes during protein biosynthesis. In Methylobacillus flagellatus (strain ATCC 51484 / DSM 6875 / VKM B-1610 / KT), this protein is Elongation factor Tu 2.